The primary structure comprises 127 residues: Large ribosomal subunit protein bL17 (127 aa).

The protein belongs to the bacterial ribosomal protein bL17 family. As to quaternary structure, part of the 50S ribosomal subunit. Contacts protein L32.

In Lactobacillus johnsonii (strain CNCM I-12250 / La1 / NCC 533), this protein is Large ribosomal subunit protein bL17.